We begin with the raw amino-acid sequence, 192 residues long: UPF0301 protein Bmul_2524/BMULJ_00714 (192 aa).

Belongs to the UPF0301 (AlgH) family.

The protein is UPF0301 protein Bmul_2524/BMULJ_00714 of Burkholderia multivorans (strain ATCC 17616 / 249).